A 243-amino-acid chain; its full sequence is MKSLWQEWLGAIAFYTCLPISPRWPIQLAGAAKWCPWVGLVLGGMLWGVQWLLDFLQVPSPVASAVLVALWLALTGGLHLDGAMDTADGLAVRDQQRRLEVMADSRAGAFGVMAAMVILLLKVTSLSSLEKGSVLVWVLVLGRLAQVWAIARYPYLKPQGTGQIHKTSGVFPRDFWPSGLLVLLLSFLLPLPLGQLLFGLLLILLIPAWFQSQLGGHTGDSYGAVVEWTEALLLVAFTVGSAS.

Transmembrane regions (helical) follow at residues 8-28 (WLGA…PIQL), 36-56 (PWVG…LDFL), 58-78 (VPSP…TGGL), 107-127 (AGAF…TSLS), 131-151 (KGSV…WAIA), 187-207 (FLLP…LLIP), and 222-242 (YGAV…VGSA).

It belongs to the CobS family. Mg(2+) is required as a cofactor.

The protein resides in the cell inner membrane. The catalysed reaction is alpha-ribazole + adenosylcob(III)inamide-GDP = adenosylcob(III)alamin + GMP + H(+). It catalyses the reaction alpha-ribazole 5'-phosphate + adenosylcob(III)inamide-GDP = adenosylcob(III)alamin 5'-phosphate + GMP + H(+). It participates in cofactor biosynthesis; adenosylcobalamin biosynthesis; adenosylcobalamin from cob(II)yrinate a,c-diamide: step 7/7. In terms of biological role, joins adenosylcobinamide-GDP and alpha-ribazole to generate adenosylcobalamin (Ado-cobalamin). Also synthesizes adenosylcobalamin 5'-phosphate from adenosylcobinamide-GDP and alpha-ribazole 5'-phosphate. This chain is Adenosylcobinamide-GDP ribazoletransferase, found in Thermosynechococcus vestitus (strain NIES-2133 / IAM M-273 / BP-1).